A 115-amino-acid polypeptide reads, in one-letter code: Large ribosomal subunit protein bL19 (115 aa).

Belongs to the bacterial ribosomal protein bL19 family.

This protein is located at the 30S-50S ribosomal subunit interface and may play a role in the structure and function of the aminoacyl-tRNA binding site. The protein is Large ribosomal subunit protein bL19 of Buchnera aphidicola subsp. Acyrthosiphon pisum (strain Tuc7).